Consider the following 451-residue polypeptide: tRNA modification GTPase MnmE (451 aa).

(6S)-5-formyl-5,6,7,8-tetrahydrofolate contacts are provided by Arg-23, Glu-80, and Lys-119. The TrmE-type G domain maps to 215-372 (GIKVVLTGQP…LRTVLLKTVG (158 aa)). Asn-225 provides a ligand contact to K(+). GTP-binding positions include 225 to 230 (NVGKSS), 244 to 250 (TEIPGTT), and 269 to 272 (DTAG). Ser-229 contacts Mg(2+). K(+) is bound by residues Thr-244, Ile-246, and Thr-249. Residue Thr-250 participates in Mg(2+) binding. Residue Lys-451 coordinates (6S)-5-formyl-5,6,7,8-tetrahydrofolate.

Belongs to the TRAFAC class TrmE-Era-EngA-EngB-Septin-like GTPase superfamily. TrmE GTPase family. As to quaternary structure, homodimer. Heterotetramer of two MnmE and two MnmG subunits. It depends on K(+) as a cofactor.

Its subcellular location is the cytoplasm. Functionally, exhibits a very high intrinsic GTPase hydrolysis rate. Involved in the addition of a carboxymethylaminomethyl (cmnm) group at the wobble position (U34) of certain tRNAs, forming tRNA-cmnm(5)s(2)U34. The sequence is that of tRNA modification GTPase MnmE from Nitrosomonas eutropha (strain DSM 101675 / C91 / Nm57).